A 257-amino-acid chain; its full sequence is DNA repair protein RecO (257 aa).

It belongs to the RecO family.

Functionally, involved in DNA repair and RecF pathway recombination. The polypeptide is DNA repair protein RecO (Variovorax paradoxus (strain S110)).